The sequence spans 377 residues: Succinyl-diaminopimelate desuccinylase (377 aa).

His-67 provides a ligand contact to Zn(2+). Residue Asp-69 is part of the active site. Asp-100 contacts Zn(2+). Catalysis depends on Glu-134, which acts as the Proton acceptor. Positions 135, 163, and 349 each coordinate Zn(2+).

The protein belongs to the peptidase M20A family. DapE subfamily. As to quaternary structure, homodimer. The cofactor is Zn(2+). Co(2+) is required as a cofactor.

It carries out the reaction N-succinyl-(2S,6S)-2,6-diaminopimelate + H2O = (2S,6S)-2,6-diaminopimelate + succinate. Its pathway is amino-acid biosynthesis; L-lysine biosynthesis via DAP pathway; LL-2,6-diaminopimelate from (S)-tetrahydrodipicolinate (succinylase route): step 3/3. Catalyzes the hydrolysis of N-succinyl-L,L-diaminopimelic acid (SDAP), forming succinate and LL-2,6-diaminopimelate (DAP), an intermediate involved in the bacterial biosynthesis of lysine and meso-diaminopimelic acid, an essential component of bacterial cell walls. The sequence is that of Succinyl-diaminopimelate desuccinylase from Glaesserella parasuis serovar 5 (strain SH0165) (Haemophilus parasuis).